The following is a 142-amino-acid chain: Coiled-coil-helix-coiled-coil-helix domain-containing protein 10, mitochondrial (142 aa).

A mitochondrion-targeting transit peptide spans Met-1–Pro-16. Positions Met-1 to Ser-20 are enriched in low complexity. Disordered stretches follow at residues Met-1–Met-45 and Ala-68–Leu-97. Pro residues predominate over residues Ala-21 to Ser-39. A compositionally biased stretch (low complexity) spans Pro-80–Thr-90. A CHCH domain is found at Met-99–Ser-140. 2 short sequence motifs (cx9C motif) span residues Cys-102–Cys-112 and Cys-122–Cys-132. 2 disulfide bridges follow: Cys-102–Cys-132 and Cys-112–Cys-122.

Ubiquitously expressed. Higher expression is observed in heart and liver.

It is found in the mitochondrion intermembrane space. In terms of biological role, may be involved in the maintenance of mitochondrial organization and mitochondrial cristae structure. The protein is Coiled-coil-helix-coiled-coil-helix domain-containing protein 10, mitochondrial (CHCHD10) of Homo sapiens (Human).